A 138-amino-acid chain; its full sequence is uncharacterized protein (138 aa).

It belongs to the IIV-3 015R family.

This is an uncharacterized protein from Simulium iridescent virus (IIV-22).